The chain runs to 338 residues: Ketol-acid reductoisomerase (NADP(+)) (338 aa).

Residues 1–181 enclose the KARI N-terminal Rossmann domain; sequence MNVFYDKDAD…GGGRAGIIET (181 aa). NADP(+) contacts are provided by residues 24–27, arginine 47, and serine 52; that span reads YGSQ. Histidine 107 is a catalytic residue. Residue glycine 133 participates in NADP(+) binding. A KARI C-terminal knotted domain is found at 182 to 327; it reads NFREETETDL…AKLRAMMPWI (146 aa). Residues aspartate 190, glutamate 194, glutamate 226, and glutamate 230 each contribute to the Mg(2+) site. Residue serine 251 participates in substrate binding.

This sequence belongs to the ketol-acid reductoisomerase family. The cofactor is Mg(2+).

It carries out the reaction (2R)-2,3-dihydroxy-3-methylbutanoate + NADP(+) = (2S)-2-acetolactate + NADPH + H(+). It catalyses the reaction (2R,3R)-2,3-dihydroxy-3-methylpentanoate + NADP(+) = (S)-2-ethyl-2-hydroxy-3-oxobutanoate + NADPH + H(+). It functions in the pathway amino-acid biosynthesis; L-isoleucine biosynthesis; L-isoleucine from 2-oxobutanoate: step 2/4. Its pathway is amino-acid biosynthesis; L-valine biosynthesis; L-valine from pyruvate: step 2/4. Involved in the biosynthesis of branched-chain amino acids (BCAA). Catalyzes an alkyl-migration followed by a ketol-acid reduction of (S)-2-acetolactate (S2AL) to yield (R)-2,3-dihydroxy-isovalerate. In the isomerase reaction, S2AL is rearranged via a Mg-dependent methyl migration to produce 3-hydroxy-3-methyl-2-ketobutyrate (HMKB). In the reductase reaction, this 2-ketoacid undergoes a metal-dependent reduction by NADPH to yield (R)-2,3-dihydroxy-isovalerate. The polypeptide is Ketol-acid reductoisomerase (NADP(+)) (Burkholderia cenocepacia (strain HI2424)).